Consider the following 227-residue polypeptide: UPF0173 metal-dependent hydrolase BPUM_2573 (227 aa).

It belongs to the UPF0173 family.

The chain is UPF0173 metal-dependent hydrolase BPUM_2573 from Bacillus pumilus (strain SAFR-032).